A 314-amino-acid polypeptide reads, in one-letter code: Cytochrome f (314 aa).

Residues 1 to 30 (MATNKFFKSLLFTLTIAISSFGFCVENSSA) form the signal peptide. 4 residues coordinate heme: Tyr31, Cys51, Cys54, and His55. A helical membrane pass occupies residues 280–300 (ILGYLAFCFCLLLTQVLLVLK).

The protein belongs to the cytochrome f family. In terms of assembly, the 4 large subunits of the cytochrome b6-f complex are cytochrome b6, subunit IV (17 kDa polypeptide, petD), cytochrome f and the Rieske protein, while the 4 small subunits are PetG, PetL, PetM and PetN. The complex functions as a dimer. Requires heme as cofactor.

The protein resides in the plastid. The protein localises to the chloroplast thylakoid membrane. Component of the cytochrome b6-f complex, which mediates electron transfer between photosystem II (PSII) and photosystem I (PSI), cyclic electron flow around PSI, and state transitions. The chain is Cytochrome f from Thalassiosira pseudonana (Marine diatom).